The chain runs to 1820 residues: uncharacterized protein (1820 aa).

9 disordered regions span residues 1–73 (MQWT…TLSG), 86–158 (TTTT…VRSA), 226–260 (GSSG…NNNY), 286–366 (EERA…QETE), 453–497 (DVQD…RNLS), 519–548 (LSSI…TDTA), 577–597 (GNSS…PPTP), 619–689 (GAGT…TASG), and 735–830 (HSHN…TPSS). Residues 20 to 31 (NRNSIEQRTPAN) show a composition bias toward polar residues. Residues 86 to 128 (TTTTTIIESSSSTNTTLEKNSPSPAGGSCSSGSGSLSPAYLQH) show a composition bias toward low complexity. Residues 129-146 (HLQHHGSPLHHLQVHHHT) are compositionally biased toward basic residues. The span at 247–259 (SNSSNCSSQFNNN) shows a compositional bias: low complexity. Residues 265–308 (VDSLDDMLRKLTELEQRVIEAEERAEEAEDKVRAMEQRLSEWPK) are a coiled coil. Residues 294–305 (DKVRAMEQRLSE) are compositionally biased toward basic and acidic residues. Residues 346–358 (ASGGATAGAAGSG) show a composition bias toward low complexity. A coiled-coil region spans residues 362–438 (TQETEKTITS…LKNHIANQSQ (77 aa)). Residues 453-463 (DVQDFTGSGSN) show a composition bias toward polar residues. Phosphoserine occurs at positions 542 and 543. Residues 623 to 632 (GTSTAESTAS) show a composition bias toward low complexity. The segment covering 655–669 (HGSGTGIGTGDGHGT) has biased composition (gly residues). A compositionally biased stretch (low complexity) spans 738-769 (NSSSTDNTETSTSGSASSPSKSLKTSSSLSPA). Over residues 787–818 (QSRTSTTPSSRINQHLQPSQHQHHTLSNQNHG) the composition is skewed to polar residues. 2 PH domains span residues 909 to 1003 (SLEK…NVQR) and 1017 to 1124 (KPTV…VVSG). Serine 1073, serine 1075, and serine 1077 each carry phosphoserine. The 220-residue stretch at 1159–1378 (HTKDTITAPL…PSRMEVLSIL (220 aa)) folds into the MyTH4 domain. The FERM domain maps to 1389–1712 (HAIPVHMMNS…DYMNALGHTV (324 aa)). Disordered regions lie at residues 1713–1748 (PGTP…ATGF) and 1764–1820 (ATHT…QRIK). The segment covering 1714 to 1724 (GTPQMNSLTRN) has biased composition (polar residues). Residues 1764 to 1781 (ATHTLNSNHSHTLSSSHH) show a composition bias toward low complexity. The segment covering 1805 to 1820 (HQPDILKSTPDHQRIK) has biased composition (basic and acidic residues).

This is an uncharacterized protein from Drosophila melanogaster (Fruit fly).